A 319-amino-acid polypeptide reads, in one-letter code: MTGDRPWHGQCSLQLISKTATDDLQSQLTVHQSQCTAPFKIQRANLDHDGRCQLPLLHTAGGLVGGDQLSVNVKAGADSRGLVTSVAAQKVYGSVGRSKQHPKGRWASQECHFELETNADLEWLPQELVVFQGGLYKQRMQVELQPKASFLCAEVVRLGRTAAGETLNEGAWRSSLEICRQTPIGRQWELVDQLELNSEVLQSLHGMGTQPVFGSFVWAAPHPLTADVMEILLRNCRTDRANLEGSMACGGLDQGLVARYIGPSSQAARQWFSRLWARTRQLRRLSTPQPPREWPLQEEGTFSNERFTKDHQSPSASPH.

Residues 284 to 319 (RLSTPQPPREWPLQEEGTFSNERFTKDHQSPSASPH) form a disordered region.

It belongs to the UreD family. In terms of assembly, ureD, UreF and UreG form a complex that acts as a GTP-hydrolysis-dependent molecular chaperone, activating the urease apoprotein by helping to assemble the nickel containing metallocenter of UreC. The UreE protein probably delivers the nickel.

The protein resides in the cytoplasm. Its function is as follows. Required for maturation of urease via the functional incorporation of the urease nickel metallocenter. In Prochlorococcus marinus (strain MIT 9313), this protein is Urease accessory protein UreD.